The following is a 251-amino-acid chain: Isopentenyl-diphosphate delta-isomerase (251 aa).

Residue Lys49 participates in substrate binding. Residues His53 and His66 each contribute to the Mg(2+) site. Residues 64–212 (LLHRAFSVFL…SNSFTPWFKL (149 aa)) enclose the Nudix hydrolase domain. Residues Arg86 and Lys90 each contribute to the substrate site. Cys102 is a catalytic residue. Substrate is bound at residue Ser103. Mg(2+) contacts are provided by Glu162 and Glu164. Residue Glu164 is part of the active site.

This sequence belongs to the IPP isomerase type 1 family. Mg(2+) is required as a cofactor.

It localises to the cytoplasm. The catalysed reaction is isopentenyl diphosphate = dimethylallyl diphosphate. Its pathway is isoprenoid biosynthesis; dimethylallyl diphosphate biosynthesis; dimethylallyl diphosphate from isopentenyl diphosphate: step 1/1. Isopentenyl-diphosphate delta-isomerase; part of the second module of ergosterol biosynthesis pathway that includes the middle steps of the pathway. The second module is carried out in the vacuole and involves the formation of farnesyl diphosphate, which is also an important intermediate in the biosynthesis of ubiquinone, dolichol, heme and prenylated proteins. Activity by the mevalonate kinase first converts mevalonate into 5-phosphomevalonate. 5-phosphomevalonate is then further converted to 5-diphosphomevalonate by the phosphomevalonate kinase. The diphosphomevalonate decarboxylase then produces isopentenyl diphosphate. The isopentenyl-diphosphate delta-isomerase then catalyzes the 1,3-allylic rearrangement of the homoallylic substrate isopentenyl (IPP) to its highly electrophilic allylic isomer, dimethylallyl diphosphate (DMAPP). Finally the farnesyl diphosphate synthase catalyzes the sequential condensation of isopentenyl pyrophosphate with dimethylallyl pyrophosphate, and then with the resultant geranylpyrophosphate to the ultimate product farnesyl pyrophosphate. The chain is Isopentenyl-diphosphate delta-isomerase from Phaffia rhodozyma (Yeast).